The chain runs to 139 residues: D-ribose pyranase (139 aa).

Residue histidine 20 is the Proton donor of the active site. Residues aspartate 28, histidine 106, and 128 to 130 (YAN) contribute to the substrate site.

This sequence belongs to the RbsD / FucU family. RbsD subfamily. As to quaternary structure, homodecamer.

It localises to the cytoplasm. The catalysed reaction is beta-D-ribopyranose = beta-D-ribofuranose. The protein operates within carbohydrate metabolism; D-ribose degradation; D-ribose 5-phosphate from beta-D-ribopyranose: step 1/2. In terms of biological role, catalyzes the interconversion of beta-pyran and beta-furan forms of D-ribose. This is D-ribose pyranase from Glaesserella parasuis serovar 5 (strain SH0165) (Haemophilus parasuis).